A 552-amino-acid chain; its full sequence is MPGPRASLPSLSAVDNVCWRCCSSSSGRPVPGQRLRGFAIANQARPLSTSPVRPLRFGATTTVRAAASQSPRPNGAYFLSNVLLERFGGFQFSPRSRAIAGTSGSNISNTKRNATVAAADIPPSTSTPRPQVDEELPPHRRRQAARRTAEQAASASSNAPSEAAQTTPVTPPPAAPSGEIPPDASSILSNAAAAQPAQSLRRRLTTLLALSKPRLTMLVVLSAMVPYALYPVPDFLTPGVSAPSLSPLTLLFLTTGTTLCSAAANALNMIYEPKTDALMSRTRTRPLVRNLVTTRAAVCFALFCATTGILALQFGVNPTVAFLGAANIVLYAGIYTPLKRVSALNTWVGAVVGGIPPLMGWAAAAGESAVGDGSWRELLLAPDGSSAGGWLFAALLFTWQFPHFMALSWGVRDEYRAAGLRMLAWTNPARNARVALRYGLVFVPLCVGLCAVGVTEWSFAVTSLPVNLWLARESIRFWQTQGAAGSARGLFWASVWHLPVVMVLALLQKKGMWGRVWRSVFGEPDLDDDLASDDGWEYLDESEEPPAVTTRS.

A disordered region spans residues 118–185 (AADIPPSTST…PSGEIPPDAS (68 aa)). Residues 150–168 (EQAASASSNAPSEAAQTTP) show a composition bias toward low complexity. Helical transmembrane passes span 215–235 (LTMLVVLSAMVPYALYPVPDF), 245–267 (LSPLTLLFLTTGTTLCSAAANAL), 296–316 (AAVCFALFCATTGILALQFGV), 318–338 (PTVAFLGAANIVLYAGIYTPL), 346–366 (TWVGAVVGGIPPLMGWAAAAG), 387–407 (AGGWLFAALLFTWQFPHFMAL), 441–461 (VFVPLCVGLCAVGVTEWSFAV), and 487–507 (ARGLFWASVWHLPVVMVLALL).

It belongs to the UbiA prenyltransferase family.

The protein localises to the mitochondrion membrane. The enzyme catalyses heme b + (2E,6E)-farnesyl diphosphate + H2O = Fe(II)-heme o + diphosphate. Converts protoheme IX and farnesyl diphosphate to heme O. This is Protoheme IX farnesyltransferase, mitochondrial (COX10) from Pyricularia oryzae (strain 70-15 / ATCC MYA-4617 / FGSC 8958) (Rice blast fungus).